Consider the following 103-residue polypeptide: Large ribosomal subunit protein bL21 (103 aa).

Belongs to the bacterial ribosomal protein bL21 family. Part of the 50S ribosomal subunit. Contacts protein L20.

In terms of biological role, this protein binds to 23S rRNA in the presence of protein L20. In Marinobacter nauticus (strain ATCC 700491 / DSM 11845 / VT8) (Marinobacter aquaeolei), this protein is Large ribosomal subunit protein bL21.